Reading from the N-terminus, the 475-residue chain is MRNFTKQYINGEWVESTSGETLEVINPATEEVAGTIAKGNKEDVEKAVEAADNVYLEFRHTSVKERQDLLDQIVQEYKNRKEDLIQAITDELGAPLSVAENVHYQMGLDHFEAARDALNDFQFEERRGDDLVVKEAIGVSGLITPWNFPTNQTSLKLAAAFAAGSPVVFKPSEETPFAAIILAEIFDKVGVPKGVFNLVNGDGQGVGNPLSEHPKVRMMSFTGSGPTGSSIMKKAAEDFKKVSLELGGKSPYIILDDADIDGAASAAANKVVFNTGQVCTAGTRTIVPASIKEDFLTAVKEKFSQVKVGNPREEGTQVGPIISKKQFDQVQAYIDKGIEEGAELLYGGPGKPEGLDKGYFARPTIFNNVDNSMTIAQEEIFGPVMSVITYNDLDEAIKIANDTKYGLAGYVYGSDKDTLHKVARSIEAGTVEINEAGRKPDLPFGGYKQSGLGREWGDYGIEEFLEVKSIAGYYN.

201-207 (GDGQGVG) lines the NAD(+) pocket. Residues glutamate 245 and cysteine 279 contribute to the active site.

It belongs to the aldehyde dehydrogenase family.

The catalysed reaction is an aldehyde + NAD(+) + H2O = a carboxylate + NADH + 2 H(+). This is Putative aldehyde dehydrogenase SSP0762 from Staphylococcus saprophyticus subsp. saprophyticus (strain ATCC 15305 / DSM 20229 / NCIMB 8711 / NCTC 7292 / S-41).